A 563-amino-acid chain; its full sequence is Efflux pump FUS6 (563 aa).

A disordered region spans residues 1–30; sequence MPQPDKMAAVNNAMPQPAPEKSLSSDPQPE. 5 helical membrane passes run 39-59, 75-95, 105-125, 138-158, and 167-187; these read WLIFVAIALTTFLAALDTSII, LYVWIIDAYLLASTATIPIFA, SLTLIAVCIFTLGSGLCGGAH, GIGGGGILTMSEIVVCDMVSI, and IIGGVWAIAAVVAPVMGGAFA. An N-linked (GlcNAc...) asparagine glycan is attached at asparagine 189. Helical transmembrane passes span 194-214, 233-253, and 261-281; these read WIFYINLPIAGVSLVALGLFL, WGGSVLLIGSVTSIVLALSWG, and GWQTIVPLVIGLLALVAFFAY. N-linked (GlcNAc...) asparagine glycosylation occurs at asparagine 299. Transmembrane regions (helical) follow at residues 305–325, 340–360, 368–388, 401–421, 433–453, and 509–529; these read LLVISFIHSLLLYWVCYFLPV, VMLFPIACTSAPAGVAAGITI, VWHFTGFVLMSIACGLFTLLD, ILFGVGTGTVFTSTLPPILAS, AWTFIRNFGSIWGVAIPAAVF, and KVVWQVSLAFCLLGFILCFFV. Asparagine 553 carries an N-linked (GlcNAc...) asparagine glycan.

The protein belongs to the major facilitator superfamily. TCR/Tet family.

The protein localises to the membrane. Its function is as follows. Efflux pump; part of the gene cluster that mediates the biosynthesis of the mycotoxin fusarin C. Within the cluster, FUS1, FUS2, FUS8 and FUS9 are sufficient for fusarin production. The other FUS cluster members are not essential for fusarin C biosynthesis. The chain is Efflux pump FUS6 from Gibberella moniliformis (strain M3125 / FGSC 7600) (Maize ear and stalk rot fungus).